The chain runs to 208 residues: Large ribosomal subunit protein uL4 (208 aa).

Residues 58–77 are disordered; it reads RGGGRKPWRQKGTGRARQGS. Residues 60–71 show a composition bias toward basic residues; the sequence is GGRKPWRQKGTG.

The protein belongs to the universal ribosomal protein uL4 family. In terms of assembly, part of the 50S ribosomal subunit.

One of the primary rRNA binding proteins, this protein initially binds near the 5'-end of the 23S rRNA. It is important during the early stages of 50S assembly. It makes multiple contacts with different domains of the 23S rRNA in the assembled 50S subunit and ribosome. Its function is as follows. Forms part of the polypeptide exit tunnel. The polypeptide is Large ribosomal subunit protein uL4 (Caldicellulosiruptor bescii (strain ATCC BAA-1888 / DSM 6725 / KCTC 15123 / Z-1320) (Anaerocellum thermophilum)).